The chain runs to 132 residues: Small ribosomal subunit protein uS8 (132 aa).

This sequence belongs to the universal ribosomal protein uS8 family. In terms of assembly, part of the 30S ribosomal subunit. Contacts proteins S5 and S12.

One of the primary rRNA binding proteins, it binds directly to 16S rRNA central domain where it helps coordinate assembly of the platform of the 30S subunit. In Caldanaerobacter subterraneus subsp. tengcongensis (strain DSM 15242 / JCM 11007 / NBRC 100824 / MB4) (Thermoanaerobacter tengcongensis), this protein is Small ribosomal subunit protein uS8 (rpsH).